A 912-amino-acid chain; its full sequence is Androgen receptor (912 aa).

The interval 1–550 (MEVQLGLGRV…PIDYYFPPQK (550 aa)) is modulating. The segment at 1–579 (MEVQLGLGRV…GSCKVFFKRA (579 aa)) is interaction with ZNF318. Disordered regions lie at residues 35–156 (QNPG…GPTF) and 204–236 (QQQQEVVSEGGSSGRAREAAGAPTSSKDSYLGG). Phosphoserine; by CDK9 is present on serine 69. Phosphoserine is present on serine 82. Positions 204-213 (QQQQEVVSEG) are enriched in low complexity. Over residues 226-236 (PTSSKDSYLGG) the composition is skewed to polar residues. Tyrosine 233 carries the post-translational modification Phosphotyrosine; by CSK. Serine 266 bears the Phosphoserine mark. The residue at position 277 (tyrosine 277) is a Phosphotyrosine; by CSK and TNK2. A phosphotyrosine; by CSK mark is found at tyrosine 315, tyrosine 354, tyrosine 365, and tyrosine 370. Tyrosine 371 is subject to Phosphotyrosine; by CSK and TNK2. The interval 375 to 394 (LSLAGPPPPPPSPHPHARIK) is disordered. Over residues 379–388 (GPPPPPPSPH) the composition is skewed to pro residues. Lysine 394 participates in a covalent cross-link: Glycyl lysine isopeptide (Lys-Gly) (interchain with G-Cter in SUMO). Residue tyrosine 401 is modified to Phosphotyrosine; by CSK. A disordered region spans residues 452-490 (LYGPCGGSGGGGTGESVSVTPYGYTRPQQGLTGQEGDFP). Positions 455–465 (PCGGSGGGGTG) are enriched in gly residues. Residue lysine 513 forms a Glycyl lysine isopeptide (Lys-Gly) (interchain with G-Cter in SUMO) linkage. Phosphotyrosine; by CSK is present on residues tyrosine 527 and tyrosine 544. The interval 544-911 (YYFPPQKTCL…GKVKPIYFHT (368 aa)) is interaction with LPXN. The segment at residues 551–624 (TCLICGDEAS…AGMTLGARRL (74 aa)) is a DNA-binding region (nuclear receptor). 2 NR C4-type zinc fingers span residues 552-572 (CLICGDEASGCHYGALTCGSC) and 588-612 (CASRNDCTIDKFRRKNCPPCRLRKC). The interaction with HIPK3 stretch occupies residues 564-654 (YGALTCGSCK…TEETTQKLTV (91 aa)). Residues 584–911 (QKYLCASRND…GKVKPIYFHT (328 aa)) form an interaction with CCAR1 region. An interaction with KAT7 region spans residues 617–911 (MTLGARRLKK…GKVKPIYFHT (295 aa)). Residue serine 643 is modified to Phosphoserine; by STK4/MST1. Residues 661–892 (ECQPIFLNVL…DFPEMMAEII (232 aa)) form the NR LBD domain. 17beta-hydroxy-5alpha-androstan-3-one is bound by residues asparagine 698 and arginine 745. Residues lysine 838 and lysine 840 each participate in a glycyl lysine isopeptide (Lys-Gly) (interchain with G-Cter in ubiquitin) cross-link. 17beta-hydroxy-5alpha-androstan-3-one is bound at residue threonine 870. At tyrosine 908 the chain carries Phosphotyrosine; by CSK.

The protein belongs to the nuclear hormone receptor family. NR3 subfamily. Binds DNA as a homodimer. Part of a ternary complex containing AR, EFCAB6/DJBP and PARK7. Interacts with HIPK3 and NR0B2 in the presence of androgen. The ligand binding domain interacts with KAT7/HBO1 in the presence of dihydrotestosterone. Interacts with EFCAB6/DJBP, PQBP1, RANBP9, RBAK, SPDEF, SRA1, TGFB1I1 and RREB1. Interacts with ZMIZ1/ZIMP10 and ZMIZ2/ZMIP7 which both enhance its transactivation activity. Interacts with SLC30A9 and RAD54L2/ARIP4. Interacts with MACROD1 (via macro domain). Interacts via the ligand-binding domain with LXXLL and FXXLF motifs from NCOA1, NCOA2, NCOA3 and MAGEA11. Interacts (via nuclear receptor DNA binding domain and nuclear receptor ligand binding domain) with NCOA4. The AR N-terminal poly-Gln region binds Ran resulting in enhancement of AR-mediated transactivation. Ran-binding decreases as the poly-Gln length increases. Interacts with HIP1 (via coiled coil domain). Interacts (via ligand-binding domain) with TRIM68. Interacts with TNK2. Interacts with USP26. Interacts with RNF6. Interacts (regulated by RNF6 probably through polyubiquitination) with RNF14; regulates AR transcriptional activity. Interacts with PRMT2 and TRIM24. Interacts with RACK1. Interacts with RANBP10; this interaction enhances dihydrotestosterone-induced AR transcriptional activity. Interacts with PRPF6 in a hormone-independent way; this interaction enhances dihydrotestosterone-induced AR transcriptional activity. Interacts with STK4/MST1. Interacts with ZIPK/DAPK3. Interacts with LPXN. Interacts with MAK. Part of a complex containing AR, MAK and NCOA3. Interacts with CRY1. Interacts with CCAR1 and GATA2. Interacts with ZNF318. Interacts with BUD31. Interacts with ARID4A. Interacts with ARID4B. Interacts (via NR LBD domain) with ZBTB7A; the interaction is direct and androgen-dependent. Interacts with NCOR1. Interacts with NCOR2. Interacts with CRY2 in a ligand-dependent manner. Phosphorylation by TNK2 enhances the DNA-binding and transcriptional activity. Phosphorylation at Ser-69 by CDK9 regulates AR promoter selectivity and cell growth. In terms of processing, sumoylated on Lys-394 (major) and Lys-513. Ubiquitinated. Deubiquitinated by USP26. 'Lys-6' and 'Lys-27'-linked polyubiquitination by RNF6 modulates AR transcriptional activity and specificity. Post-translationally, palmitoylated by ZDHHC7 and ZDHHC21. Palmitoylation is required for plasma membrane targeting and for rapid intracellular signaling via ERK and AKT kinases and cAMP generation.

The protein resides in the nucleus. It is found in the cytoplasm. Its function is as follows. Steroid hormone receptors are ligand-activated transcription factors that regulate eukaryotic gene expression and affect cellular proliferation and differentiation in target tissues. Transcription factor activity is modulated by bound coactivator and corepressor proteins like ZBTB7A that recruits NCOR1 and NCOR2 to the androgen response elements/ARE on target genes, negatively regulating androgen receptor signaling and androgen-induced cell proliferation. Transcription activation is also down-regulated by NR0B2. Activated, but not phosphorylated, by HIPK3 and ZIPK/DAPK3. The polypeptide is Androgen receptor (AR) (Crocuta crocuta (Spotted hyena)).